The primary structure comprises 185 residues: Elongation factor P (185 aa).

It belongs to the elongation factor P family.

The protein localises to the cytoplasm. Its pathway is protein biosynthesis; polypeptide chain elongation. Its function is as follows. Involved in peptide bond synthesis. Stimulates efficient translation and peptide-bond synthesis on native or reconstituted 70S ribosomes in vitro. Probably functions indirectly by altering the affinity of the ribosome for aminoacyl-tRNA, thus increasing their reactivity as acceptors for peptidyl transferase. The polypeptide is Elongation factor P (Listeria innocua serovar 6a (strain ATCC BAA-680 / CLIP 11262)).